Reading from the N-terminus, the 546-residue chain is MAAKEVKFGNEARIKMLRGVNVLADAVKVTLGPRGRNVVLDKSFGAPVITKDGVSVAREIELEDKFENMGAQMVKEVASKANDAAGDGTTTATVLAQSIVNEGLKAVAAGMNPMDLKRGIDKAVIGAVEELKRLSVPCADSKAIAQVGTISANSDEKVGILIAEAMEKVGKKGVITVEEGSGLQDELDVVEGMQFDRGYLSPYFINKQENGTVELENPFILLADKKISNIREMLPILEAVAKSSKPLLVIAEDVEGEALATLVVNTMRGIVKVAAVKAPGFGDRRKAMLQDIATLTAGTVISEEIGLELEKATLEDMGQAKRVVITKDTTTIIDGVGDKAMIDSRVAQINQQREEATSDYDREKLQERVAKLAGGVAVIKVGAATEVEMKEKKARVEDALHSTRAAVEEGVVAGGGVALIRAANGIQQLCGDNEDQNVGIKVARRAMEAPLRQIVANAGEEPSVIANNVKAEDGNMGYNAATEKYGNMIDMGILDPTKVTRSALQYAASIAGLMITTECMITDLPKEEKPDVSASSGGMGGMGGMM.

ATP contacts are provided by residues 30–33 (TLGP), Lys51, 87–91 (DGTTT), Gly415, 479–481 (NAA), and Asp495. A disordered region spans residues 527–546 (EEKPDVSASSGGMGGMGGMM). Residues 537–546 (GGMGGMGGMM) show a composition bias toward gly residues.

It belongs to the chaperonin (HSP60) family. As to quaternary structure, forms a cylinder of 14 subunits composed of two heptameric rings stacked back-to-back. Interacts with the co-chaperonin GroES.

Its subcellular location is the cytoplasm. It catalyses the reaction ATP + H2O + a folded polypeptide = ADP + phosphate + an unfolded polypeptide.. Together with its co-chaperonin GroES, plays an essential role in assisting protein folding. The GroEL-GroES system forms a nano-cage that allows encapsulation of the non-native substrate proteins and provides a physical environment optimized to promote and accelerate protein folding. The polypeptide is Chaperonin GroEL (Baumannia cicadellinicola subsp. Homalodisca coagulata).